Reading from the N-terminus, the 746-residue chain is Polyphosphate kinase (746 aa).

Positions 1-17 (MRQPNTQAEAQHTQPSV) are enriched in polar residues. The disordered stretch occupies residues 1 to 60 (MRQPNTQAEAQHTQPSVGSIAAHRPNTVAATVSGLEPDIDADLDAYEESEESQDGGARLP). The segment covering 37-53 (PDIDADLDAYEESEESQ) has biased composition (acidic residues). Asparagine 102 is an ATP binding site. 2 residues coordinate Mg(2+): arginine 429 and arginine 459. Catalysis depends on histidine 489, which acts as the Phosphohistidine intermediate. Residues tyrosine 522, arginine 618, and histidine 646 each contribute to the ATP site.

The protein belongs to the polyphosphate kinase 1 (PPK1) family. Requires Mg(2+) as cofactor. Post-translationally, an intermediate of this reaction is the autophosphorylated ppk in which a phosphate is covalently linked to a histidine residue through a N-P bond.

It carries out the reaction [phosphate](n) + ATP = [phosphate](n+1) + ADP. Its function is as follows. Catalyzes the reversible transfer of the terminal phosphate of ATP to form a long-chain polyphosphate (polyP). In Streptomyces coelicolor (strain ATCC BAA-471 / A3(2) / M145), this protein is Polyphosphate kinase.